A 295-amino-acid chain; its full sequence is Nitrogenase iron protein 1 (295 aa).

13-20 (GKGGIGKS) provides a ligand contact to ATP. C101 provides a ligand contact to [4Fe-4S] cluster. An ADP-ribosylarginine; by dinitrogenase reductase ADP-ribosyltransferase modification is found at R104. A [4Fe-4S] cluster-binding site is contributed by C135.

The protein belongs to the NifH/BchL/ChlL family. In terms of assembly, homodimer. It depends on [4Fe-4S] cluster as a cofactor. In terms of processing, the reversible ADP-ribosylation of Arg-104 inactivates the nitrogenase reductase and regulates nitrogenase activity.

The catalysed reaction is N2 + 8 reduced [2Fe-2S]-[ferredoxin] + 16 ATP + 16 H2O = H2 + 8 oxidized [2Fe-2S]-[ferredoxin] + 2 NH4(+) + 16 ADP + 16 phosphate + 6 H(+). In terms of biological role, the key enzymatic reactions in nitrogen fixation are catalyzed by the nitrogenase complex, which has 2 components: the iron protein and the molybdenum-iron protein. This is Nitrogenase iron protein 1 (nifH1) from Nostoc sp. (strain PCC 7120 / SAG 25.82 / UTEX 2576).